A 147-amino-acid chain; its full sequence is Hemoglobin subunit beta (147 aa).

Valine 2 bears the N-acetylvaline mark. The 145-residue stretch at 3–147 (HLSAEEKEAV…VANALAHKYH (145 aa)) folds into the Globin domain. Serine 45 is modified (phosphoserine). Lysine 60 is modified (N6-acetyllysine). Histidine 64 provides a ligand contact to heme b. Lysine 83 carries the N6-acetyllysine modification. Heme b is bound at residue histidine 93. An S-nitrosocysteine modification is found at cysteine 94. Lysine 145 bears the N6-acetyllysine mark.

It belongs to the globin family. As to quaternary structure, heterotetramer of two alpha chains and two beta chains. As to expression, red blood cells.

Involved in oxygen transport from the lung to the various peripheral tissues. The polypeptide is Hemoglobin subunit beta (HBB) (Sus scrofa (Pig)).